We begin with the raw amino-acid sequence, 381 residues long: Pyrimidine monooxygenase RutA (381 aa).

Residues 66–67, N132, E141, 157–158, and S207 contribute to the FMN site; these read IK and RY.

Belongs to the NtaA/SnaA/DszA monooxygenase family. RutA subfamily.

The catalysed reaction is uracil + FMNH2 + NADH + O2 = (Z)-3-ureidoacrylate + FMN + NAD(+) + H2O + H(+). It catalyses the reaction thymine + FMNH2 + NADH + O2 = (Z)-2-methylureidoacrylate + FMN + NAD(+) + H2O + H(+). Functionally, catalyzes the pyrimidine ring opening between N-3 and C-4 by an unusual flavin hydroperoxide-catalyzed mechanism, adding oxygen atoms in the process to yield ureidoacrylate peracid, that immediately reacts with FMN forming ureidoacrylate and FMN-N(5)-oxide. The FMN-N(5)-oxide reacts spontaneously with NADH to produce FMN. Requires the flavin reductase RutF to regenerate FMN in vivo. This Methylobacterium radiotolerans (strain ATCC 27329 / DSM 1819 / JCM 2831 / NBRC 15690 / NCIMB 10815 / 0-1) protein is Pyrimidine monooxygenase RutA.